The primary structure comprises 836 residues: MSDTDGKKPLGLGGGSRSGQVKQSFSHGRTKSVLVETKRKRVVVPKPGASGSSTTTSSPSHLGDPAKRPAGISDAEMERRLAALRAAKLREVEDAKRRADEERQREEERQRRREELEAKEREERERAEALRQKAEDEERARREAEEAARRAEEAKRAPAPAAPQPAPAESRASAPPSAKPGLPPSRKEREREADRDRTTKKDDSRRSGKLTLNEALSGEGGRTRSLAAMKRKQEKARQKAMGFGHKAEKQVRDVQLPETILVQELANRMAERAADVVKALMKMGMMVTMNQSIDADTAELVIEEFGHRAVRVSDADVEHVIDTVEDKAEDLQPRPPIITIMGHVDHGKTSLLDAIRKTSVVSGEAGGITQHIGAYQVKTESGAVLTFLDTPGHAAFTSMRARGAQVTDIVVLVVAADDAVMPQTVEAIKHAKAAKVPMIVAINKIDKPDADPNKVRTDLLQHEVIVEKMSGDVLDVEVSAKTGLGLDELLENIALQAEILDLRANPSRQAQGAVIEAKLDVGRGPVATVLVQYGTLKRGDIFVVGQQWGKVRALINDKGERVDEAGPSVPVEVLGLNGTPEAGDVLNVVETEAQAREIADYREKAARDKRAAAGAATTLEQLMAKAKADADVAELPVVIKADVQGSAEAIVQALEKVGNDEVRVRVLHYGVGAITETDITLAEASQAAVIGFNVRANASARQAANQKSVEIRYYSVIYDLVDDVKKAASGLLKAEVREHFIGYAQIKEVFRITGVGNVAGCIVTEGVARRSAGVRLLRDNIVIHEGTLKTLKRFKDEVKEVQSGQECGMAFERYEDIRPGDVIEIFEREEVQRKLA.

A disordered region spans residues 1–233 (MSDTDGKKPL…RSLAAMKRKQ (233 aa)). Positions 18-27 (SGQVKQSFSH) are enriched in polar residues. Positions 50-60 (SGSSTTTSSPS) are enriched in low complexity. The segment covering 88 to 156 (KLREVEDAKR…AARRAEEAKR (69 aa)) has biased composition (basic and acidic residues). Residues 167-176 (PAESRASAPP) are compositionally biased toward low complexity. Residues 185-206 (SRKEREREADRDRTTKKDDSRR) are compositionally biased toward basic and acidic residues. Residues 333–501 (PRPPIITIMG…NIALQAEILD (169 aa)) form the tr-type G domain. The tract at residues 342 to 349 (GHVDHGKT) is G1. Residue 342–349 (GHVDHGKT) participates in GTP binding. Residues 367–371 (GITQH) form a G2 region. Residues 389 to 392 (DTPG) are G3. Residues 389–393 (DTPGH) and 443–446 (NKID) contribute to the GTP site. The G4 stretch occupies residues 443-446 (NKID). The interval 479-481 (SAK) is G5.

Belongs to the TRAFAC class translation factor GTPase superfamily. Classic translation factor GTPase family. IF-2 subfamily.

The protein resides in the cytoplasm. In terms of biological role, one of the essential components for the initiation of protein synthesis. Protects formylmethionyl-tRNA from spontaneous hydrolysis and promotes its binding to the 30S ribosomal subunits. Also involved in the hydrolysis of GTP during the formation of the 70S ribosomal complex. The sequence is that of Translation initiation factor IF-2 from Cereibacter sphaeroides (strain ATCC 17023 / DSM 158 / JCM 6121 / CCUG 31486 / LMG 2827 / NBRC 12203 / NCIMB 8253 / ATH 2.4.1.) (Rhodobacter sphaeroides).